The chain runs to 122 residues: Ribosome-binding factor A (122 aa).

Belongs to the RbfA family. As to quaternary structure, monomer. Binds 30S ribosomal subunits, but not 50S ribosomal subunits or 70S ribosomes.

The protein resides in the cytoplasm. One of several proteins that assist in the late maturation steps of the functional core of the 30S ribosomal subunit. Associates with free 30S ribosomal subunits (but not with 30S subunits that are part of 70S ribosomes or polysomes). Required for efficient processing of 16S rRNA. May interact with the 5'-terminal helix region of 16S rRNA. The polypeptide is Ribosome-binding factor A (Cupriavidus pinatubonensis (strain JMP 134 / LMG 1197) (Cupriavidus necator (strain JMP 134))).